We begin with the raw amino-acid sequence, 325 residues long: uncharacterized protein (325 aa).

The chain crosses the membrane as a helical span at residues 10–30 (IVFVSLAALVLLVSVSVFIYH). In terms of domain architecture, AB hydrolase-1 spans 94-166 (KIAVVDRAGY…EIKAIIAMDI (73 aa)).

It localises to the cell membrane. This is an uncharacterized protein from Bacillus subtilis (strain 168).